The chain runs to 235 residues: 2,3-bisphosphoglycerate-dependent phosphoglycerate mutase 1 (235 aa).

Substrate is bound by residues 8–15 (RHGESVAN), 21–22 (TG), Arg-60, 87–90 (ERHY), Lys-98, and 114–115 (RR). Catalysis depends on His-9, which acts as the Tele-phosphohistidine intermediate. Glu-87 acts as the Proton donor/acceptor in catalysis.

The protein belongs to the phosphoglycerate mutase family. BPG-dependent PGAM subfamily.

The catalysed reaction is (2R)-2-phosphoglycerate = (2R)-3-phosphoglycerate. Its pathway is carbohydrate degradation; glycolysis; pyruvate from D-glyceraldehyde 3-phosphate: step 3/5. Functionally, catalyzes the interconversion of 2-phosphoglycerate and 3-phosphoglycerate. The sequence is that of 2,3-bisphosphoglycerate-dependent phosphoglycerate mutase 1 from Latilactobacillus sakei subsp. sakei (strain 23K) (Lactobacillus sakei subsp. sakei).